The primary structure comprises 63 residues: Overexpressed in colon carcinoma 1 protein homolog (63 aa).

Positions 1-10 (MGCGNSTATS) are enriched in polar residues. A disordered region spans residues 1–39 (MGCGNSTATSAAAGRGPTGAVKDTTEDSITEDDKRRNYG).

It belongs to the OCC1 family.

The polypeptide is Overexpressed in colon carcinoma 1 protein homolog (Mus musculus (Mouse)).